Consider the following 168-residue polypeptide: Photosystem I assembly protein Ycf3 (168 aa).

TPR repeat units lie at residues 35–68 (AFTY…EMDP), 72–105 (SYIL…NPFL), and 120–153 (GEQA…TPGN).

This sequence belongs to the Ycf3 family.

Its subcellular location is the plastid. The protein localises to the chloroplast thylakoid membrane. In terms of biological role, essential for the assembly of the photosystem I (PSI) complex. May act as a chaperone-like factor to guide the assembly of the PSI subunits. The chain is Photosystem I assembly protein Ycf3 from Pelargonium hortorum (Common geranium).